Reading from the N-terminus, the 310-residue chain is HMG box-containing protein C28F2.11 (310 aa).

The segment covering 69–95 has biased composition (low complexity); that stretch reads ESPSKKATSPKKATPAAVAPVEATSAV. The segment at 69 to 310 is disordered; it reads ESPSKKATSP…TTPPTAKVAN (242 aa). Phosphoserine is present on Ser-70. Thr-105 carries the phosphothreonine modification. Residues 117–187 constitute a DNA-binding region (HMG box); it reads PKRPPSAYNL…AYEEEMAAYN (71 aa). Composition is skewed to basic and acidic residues over residues 131-178 and 200-226; these read QRSE…LREA and VTAEETSTKPSEDLSSPTKKDLIDFSE. Ser-161, Ser-214, and Ser-215 each carry phosphoserine. A phosphothreonine mark is found at Thr-217 and Thr-237. Positions 255–268 are enriched in polar residues; sequence STVPTSNVEPVSQP. Residues Ser-271, Ser-278, Ser-294, Ser-295, and Ser-297 each carry the phosphoserine modification. Residues Thr-302 and Thr-305 each carry the phosphothreonine modification.

The protein localises to the cytoplasm. The sequence is that of HMG box-containing protein C28F2.11 from Schizosaccharomyces pombe (strain 972 / ATCC 24843) (Fission yeast).